We begin with the raw amino-acid sequence, 1033 residues long: MSGSFWKFGQDYSIESPVSKILNSAFIKINKDQDDDVPTGTCEENIADDEDNSSHDYAASEDNVVNENEEKEEENTLPTTESEYENYRPNLDVLDDLLDDDELYTELMCSNFKLLIFLKYPDVLSKLIEYVTNEKILDEETDSAKKPEIIEGVNDHPILIERDRKDKKEDAEEGGDSEETTNDSDHDSGDERSVDSEETSITLPPESEEQVETRRARIAAEILSADVWPISAAIMQNKDLLGRLWSILDHPAPLPIPASTYFMKINERLLDMDITGMLEFILSRDSLVARFLTHVDNPSLMDFLLKVISTDKPDSPTGVIKILKSQELIPKLLDHLNPEYGISTQSAAGDFIKAFVTLSTNSSNELASGIGPNELTRQLVSEEMIEKLIKIMLKGGTSLSNGVGIIIELIRKNNSDYDFIQLVYTTLESHPPTDRDPIHLIHLVKLFAKHMPDFADMLDKTKLPLMEMPFGNIEPLGFERFKICELIAELLHCSNMTLLNEPNGEMIAQERDIERAKELETSTEKENITAIVDNKSSYYDKDCVEKDITENLGALQINNQGSEEDELNDTGVSSVKLDVKSDAKVVEGLENDASGVELYDETLSDTESVRECLREKPLVGDRLKIALEDTKILISILDMFTEFPWNNFLHNVIFDIAQQIFNGPLKTGYNRFLLKDYLVDAYLTKKIVDADKACQDYEKKTGLRYGYMGHLTLVAEEISKFKEYIDEMKLTFCNTAVSDRLEEPFWKEYSETILADTREKYNTVLGDFGNDQESDDDVIRNSDSEDIIGDTEGNENYGNGENDELLSNGHDSGNMDLYYNFNNNENEENEEDYAEYSDVDNKNYYNNVETNDDDYDSDDGKSKSAESEFTDKISEHRDGNSLYNEDNDENGSDKWTSGTSLFPPDHFPSRSQPSDPKLQDQNIFHHQFDFEGVGDDDDYMDPNDDGQSYARPGNPLYTTPKTPPRPKTILFNSLSALDNNGEDEEVALGTSVDDRMDNEISSDEEDSEDEDEENDMGNEEGYSLYRSRSKEAF.

Disordered regions lie at residues 32 to 82 (DQDD…TTES), 147 to 213 (PEII…QVET), and 768 to 1033 (FGND…KEAF). A compositionally biased stretch (basic and acidic residues) spans 158–170 (ILIERDRKDKKED). Over residues 171-182 (AEEGGDSEETTN) the composition is skewed to acidic residues. Residues 183–195 (DSDHDSGDERSVD) are compositionally biased toward basic and acidic residues. Ser-774 carries the post-translational modification Phosphoserine. 2 stretches are compositionally biased toward acidic residues: residues 784–793 (SEDIIGDTEG) and 825–838 (ENEE…EYSD). Phosphoserine is present on residues Ser-857, Ser-862, and Ser-892. Positions 858-879 (DDGKSKSAESEFTDKISEHRDG) are enriched in basic and acidic residues. Over residues 909–924 (SRSQPSDPKLQDQNIF) the composition is skewed to polar residues. Over residues 932–944 (GVGDDDDYMDPND) the composition is skewed to acidic residues. Residue Thr-990 is modified to Phosphothreonine. Ser-991 bears the Phosphoserine mark. Positions 1000–1018 (ISSDEEDSEDEDEENDMGN) are enriched in acidic residues.

The protein belongs to the SAPS family. As to quaternary structure, associates with the SIT4 protein phosphatase catalytic subunit in a cell-cycle-dependent manner. Hyperphosphorylated in the absence of SIT4.

The protein localises to the cytoplasm. Its function is as follows. Positive regulator of protein phosphatase SIT4. Involved in the general amino acid control (GAAC) response regulated by TOR. Involved in the dephosphorylation of the elongator complex subunit IKI3. This is SIT4-associating protein SAP190 (SAP190) from Saccharomyces cerevisiae (strain ATCC 204508 / S288c) (Baker's yeast).